Consider the following 276-residue polypeptide: Cell division protein FtsQ (276 aa).

The Cytoplasmic portion of the chain corresponds to 1–11; it reads MQYILKLKYYL. A helical transmembrane segment spans residues 12–32; that stretch reads YNITWKLVFICVMLVLLIVGI. The Periplasmic segment spans residues 33–276; that stretch reads HKNIKWVCDY…NVSKGSHDYD (244 aa). The POTRA domain occupies 45–115; the sequence is GPLSYIIVTG…NTLKINLIEY (71 aa).

The protein belongs to the FtsQ/DivIB family. FtsQ subfamily. Part of a complex composed of FtsB, FtsL and FtsQ.

It localises to the cell inner membrane. Essential cell division protein. May link together the upstream cell division proteins, which are predominantly cytoplasmic, with the downstream cell division proteins, which are predominantly periplasmic. May control correct divisome assembly. In Blochmanniella floridana, this protein is Cell division protein FtsQ.